Here is a 330-residue protein sequence, read N- to C-terminus: MTHFNKGPSYGLSAEVKNKIASKYDQQAEEDLRNWIEEVTGMGIGTNFQLGLKDGIILCELINKLQPGSVKKVNESSLNWPQLENIGNFIKAIQAYGMKPHDIFEANDLFENGNMTQVQTTLVALAGLAKTKGFHTTIDIGVKYAEKQTRRFDEGKLKAGQSVIGLQMGTNKCASQAGMTAYGTRRHLYDPKMQTDKPFDQTTISLQMGTNKGASQAGMSAPGTRRDIYDQKLTLQPVDNSTISLQMGTNKVASQKGMSVYGLGRQVYDPKYCAAPTEPVIHNGSQGTGTNGSEISDSDYQAEYPDEYHGEYPDEYPREYQYGDDQGIDY.

The residue at position 23 (lysine 23) is an N6-acetyllysine. A Calponin-homology (CH) domain is found at glutamine 26–lysine 130. An N6-methyllysine modification is found at lysine 158. 3 Calponin-like repeats span residues isoleucine 164 to tyrosine 189, isoleucine 204 to tyrosine 229, and isoleucine 243 to tyrosine 268. Residues proline 279–tyrosine 330 form a disordered region. Positions aspartate 306–arginine 318 are enriched in basic and acidic residues.

Belongs to the calponin family.

Functionally, thin filament-associated protein that is implicated in the regulation and modulation of smooth muscle contraction. It is capable of binding to actin, calmodulin and tropomyosin. The interaction of calponin with actin inhibits the actomyosin Mg-ATPase activity. The sequence is that of Calponin-3 (Cnn3) from Rattus norvegicus (Rat).